Reading from the N-terminus, the 891-residue chain is Aconitate hydratase A (891 aa).

[4Fe-4S] cluster contacts are provided by Cys435, Cys501, and Cys504.

The protein belongs to the aconitase/IPM isomerase family. Monomer. The cofactor is [4Fe-4S] cluster.

It catalyses the reaction citrate = D-threo-isocitrate. Its pathway is carbohydrate metabolism; tricarboxylic acid cycle; isocitrate from oxaloacetate: step 2/2. In terms of biological role, catalyzes the reversible isomerization of citrate to isocitrate via cis-aconitate. The apo form of AcnA functions as a RNA-binding regulatory protein which plays a role as a maintenance or survival enzyme during nutritional or oxidative stress. During oxidative stress inactive AcnA apo-enzyme without iron sulfur clusters binds the acnA mRNA 3' UTRs (untranslated regions), stabilizes acnA mRNA and increases AcnA synthesis, thus mediating a post-transcriptional positive autoregulatory switch. AcnA also enhances the stability of the sodA transcript. This chain is Aconitate hydratase A, found in Escherichia coli (strain K12).